Consider the following 1286-residue polypeptide: ABC transporter B family member 1 (1286 aa).

2 consecutive transmembrane segments (helical) span residues 42-62 (VLMGIGSVGAFVHGCSLPLFL) and 93-113 (FLVVGAAIWASSWAEISCWMW). In terms of domain architecture, ABC transmembrane type-1 1 spans 44–333 (MGIGSVGAFV…SAPSMAAFAK (290 aa)). Asp139 contributes to the ATP binding site. The next 2 membrane-spanning stretches (helical) occupy residues 166–186 (LGNFIHYMATFVSGFIVGFTA) and 187–207 (VWQLALVTLAVVPLIAVIGGI). The N-linked (GlcNAc...) asparagine glycan is linked to Asn217. 2 helical membrane passes run 277-297 (ATYFVVFCCYALLLWYGGYLV) and 301-321 (LTNGGLAIATMFAVMIGGLAL). A brassinolide-binding site is contributed by Tyr286. One can recognise an ABC transporter 1 domain in the interval 368–604 (VELKNVDFSY…GENGVYAKLI (237 aa)). 7 residues coordinate ATP: Tyr377, Ser379, Arg380, Gly408, Lys409, Ser410, and Thr411. Residues 614–647 (AMSNARKSSARPSSARNSVSSPIMTRNSSYGRSP) are disordered. The segment covering 616–635 (SNARKSSARPSSARNSVSSP) has biased composition (low complexity). An N-linked (GlcNAc...) asparagine glycan is attached at Asn640. The region spanning 700–988 (ALLGSVGSVI…TLTLAPDFIK (289 aa)) is the ABC transmembrane type-1 2 domain. Transmembrane regions (helical) follow at residues 705-725 (VGSVICGSLSAFFAYVLSAVL) and 745-765 (YLLIGLSSAALVFNTLQHSFW). Residue Asn771 is glycosylated (N-linked (GlcNAc...) asparagine). Position 793 (Asp793) interacts with ATP. Asn797 carries an N-linked (GlcNAc...) asparagine glycan. 4 helical membrane passes run 821 to 843 (ISVIVQNTALMLVACTAGFVLQW), 845 to 867 (LALVLVAVFPVVVAATVLQKMFM), 932 to 952 (VAQFCLYASYALGLWYASWLV), and 967 to 987 (MVLMVSANGAAETLTLAPDFI). The brassinolide site is built by Tyr941 and Glu978. Residues 1024 to 1260 (VELKHIDFSY…HPDGIYARMI (237 aa)) form the ABC transporter 2 domain. Residues Tyr1033, Arg1036, Gly1064, Lys1065, and Ser1066 each contribute to the ATP site. The segment at 1049–1286 (ARAGKTLALV…SSSRVKEDDA (238 aa)) is interaction with FKBP42/TWD1.

Belongs to the ABC transporter superfamily. ABCB family. Multidrug resistance exporter (TC 3.A.1.201) subfamily. As to quaternary structure, interacts with 1-naphthylphthalamic acid (NPA) and FKBP42/TWD1. Ubiquitous, with high levels in peduncles. Mostly localized in young developing tissues, including meristems, as well as root and shoot apices.

Its subcellular location is the cell membrane. It carries out the reaction (indol-3-yl)acetate(in) + ATP + H2O = (indol-3-yl)acetate(out) + ADP + phosphate + H(+). The catalysed reaction is brassinolide(in) + ATP + H2O = brassinolide(out) + ADP + phosphate + H(+). It catalyses the reaction 24-epi-brassinolide(in) + ATP + H2O = 24-epi-brassinolide(out) + ADP + phosphate + H(+). The enzyme catalyses 24-epi-castasterone(in) + ATP + H2O = 24-epi-castasterone(out) + ADP + phosphate + H(+). It carries out the reaction castasterone(in) + ATP + H2O = castasterone(out) + ADP + phosphate + H(+). Transport capacity is stimulated by the chaperone protein FKBP42/TWD1. Transport activity inhibited by 1-N-naphthylphthalamic acid (NPA), cyclopropyl propane dione (CPD), cyclosporin A, verapamil and quercetin. ATPase activity is specifically activated by bioactive brassinosteroids in a dose-dependent manner, including brassinolide (BL), 24-epiBL, 24-epicastasterone (24-epiCS) and castasterone-alkyne; BL binding leads to structural changes. Inhibited by vanadate. In terms of biological role, brassinosteroid exporter that, in conjunction with ABCB19, supports the accumulation of exogenous brassinosteroids (BR) in the apoplast, thus promoting BR signaling initiation involving the specific receptor BRI1 and required for plant growth and stress responses. Auxin efflux transporter that acts as a negative regulator of light signaling to promote hypocotyl elongation. May contribute to the regulation of leaf position and morphology during PHOT1-mediated blue light responses involving auxin distribution, especially in low light fluence. Together with ABCB19 and in a FKBP42/TWD1-dependent manner, supports seed development by promoting stamen elongation and, to a lesser extent, anther dehiscence and pollen maturation, probably as auxin transporters. Mediates the accumulation of chlorophyll and anthocyanin, as well as the expression of genes in response to light. Participates directly in auxin efflux and thus regulates the polar (presumably basipetal) auxin transport (from root tips to root elongating zone). Also transports some auxin metabolites such as oxindoleacetic acid and indoleacetaldehyde. Involved in diverse auxin-mediated responses including gravitropism, phototropism and lateral root formation. Confers resistance to herbicides such as dicamba, pendimethalin, oryzalin, and monosodium acid methanearsonate (MSMA), but not to herbicides such as glyphosate, atrazine, bentazon and fluazifop-p-butyl. Also mediates resistance to xenobiotics such as cycloheximide and the cytokinin N6-(2-isopentenyl)adenine (2IP). This chain is ABC transporter B family member 1, found in Arabidopsis thaliana (Mouse-ear cress).